The following is a 594-amino-acid chain: Tripeptidyl-peptidase sed4 (594 aa).

An N-terminal signal peptide occupies residues 1-20; it reads MLSSTLYAGWLLSLAAPALC. A propeptide spans 21–187 (removed in mature form); it reads VVQEKLSAVP…AVKLPALPRR (167 aa). N-linked (GlcNAc...) asparagine glycans are attached at residues Asn-191, Asn-229, and Asn-250. Positions 197-594 constitute a Peptidase S53 domain; the sequence is LITPDCLVEM…MKLKELVLSL (398 aa). Residues Glu-272, Asp-276, and Ser-494 each act as charge relay system in the active site. Ca(2+) is bound by residues Asp-536 and Ile-537. Residue Asn-568 is glycosylated (N-linked (GlcNAc...) asparagine). Ca(2+) is bound by residues Gly-572 and Asp-574.

Requires Ca(2+) as cofactor. Post-translationally, N-glycosylated.

The protein resides in the secreted. It localises to the extracellular space. The catalysed reaction is Release of an N-terminal tripeptide from a polypeptide.. Its function is as follows. Secreted tripeptidyl-peptidase which degrades proteins at acidic pHs and is involved in virulence. The protein is Tripeptidyl-peptidase sed4 (sed4) of Aspergillus fumigatus (strain ATCC MYA-4609 / CBS 101355 / FGSC A1100 / Af293) (Neosartorya fumigata).